Consider the following 597-residue polypeptide: DNA import protein CedB (597 aa).

Residues 10 to 30 (VVLLILGIISFNLVFIILAII) form a helical membrane-spanning segment. 286–293 (GPTGSGKT) serves as a coordination point for ATP.

The protein localises to the cell membrane. In terms of biological role, part of the Ced system, which is involved in DNA import. In Sulfolobus acidocaldarius (strain ATCC 33909 / DSM 639 / JCM 8929 / NBRC 15157 / NCIMB 11770), this protein is DNA import protein CedB.